A 75-amino-acid polypeptide reads, in one-letter code: Small ribosomal subunit protein bS18 (75 aa).

The protein belongs to the bacterial ribosomal protein bS18 family. In terms of assembly, part of the 30S ribosomal subunit. Forms a tight heterodimer with protein bS6.

Functionally, binds as a heterodimer with protein bS6 to the central domain of the 16S rRNA, where it helps stabilize the platform of the 30S subunit. This Mycoplasma mycoides subsp. mycoides SC (strain CCUG 32753 / NCTC 10114 / PG1) protein is Small ribosomal subunit protein bS18.